The following is a 237-amino-acid chain: Small ribosomal subunit protein uS5 (237 aa).

Positions 1–59 (MADETNLEGVAAVEATGGEPQREGRGRGRGRGGNDRGGERGGRGRRDDRRGRGNNDEEG) are disordered. Positions 20–55 (PQREGRGRGRGRGGNDRGGERGGRGRRDDRRGRGNN) are enriched in basic and acidic residues. The 64-residue stretch at 63-126 (LIEKLVHINR…AAAKRAMVRV (64 aa)) folds into the S5 DRBM domain.

Belongs to the universal ribosomal protein uS5 family. As to quaternary structure, part of the 30S ribosomal subunit. Contacts proteins S4 and S8.

Its function is as follows. With S4 and S12 plays an important role in translational accuracy. Functionally, located at the back of the 30S subunit body where it stabilizes the conformation of the head with respect to the body. In Novosphingobium aromaticivorans (strain ATCC 700278 / DSM 12444 / CCUG 56034 / CIP 105152 / NBRC 16084 / F199), this protein is Small ribosomal subunit protein uS5.